The sequence spans 222 residues: THAP domain-containing protein 6 (222 aa).

A THAP-type zinc finger spans residues 1–89 (MVKCCSAIGC…LKPGVIPSIF (89 aa)). The HCFC1-binding motif (HBM) signature appears at 139 to 142 (EHSY). A coiled-coil region spans residues 149-194 (KKLKHKLDHVIGELEDTKESLRNVLDREKRFQKSLRKTIRELKDEC).

The protein is THAP domain-containing protein 6 (THAP6) of Homo sapiens (Human).